A 232-amino-acid polypeptide reads, in one-letter code: Large ribosomal subunit protein uL1 (232 aa).

This sequence belongs to the universal ribosomal protein uL1 family. As to quaternary structure, part of the 50S ribosomal subunit.

Functionally, binds directly to 23S rRNA. The L1 stalk is quite mobile in the ribosome, and is involved in E site tRNA release. Protein L1 is also a translational repressor protein, it controls the translation of the L11 operon by binding to its mRNA. In Maricaulis maris (strain MCS10) (Caulobacter maris), this protein is Large ribosomal subunit protein uL1.